Here is a 554-residue protein sequence, read N- to C-terminus: Probable oligo-1,6-glucosidase 3 (554 aa).

The active-site Nucleophile is D199. The Proton donor role is filled by E256.

Belongs to the glycosyl hydrolase 13 family.

It localises to the cytoplasm. It catalyses the reaction Hydrolysis of (1-&gt;6)-alpha-D-glucosidic linkages in some oligosaccharides produced from starch and glycogen by alpha-amylase, and in isomaltose.. This is Probable oligo-1,6-glucosidase 3 (yugT) from Bacillus subtilis (strain 168).